The chain runs to 1502 residues: Nucleoporin NUP170 (1502 aa).

The tract at residues 1-31 (MFQSFFHNNGPAAAGETFSDSRSYPLTNHQE) is disordered. Positions 18 to 30 (FSDSRSYPLTNHQ) are enriched in polar residues. The interval 233 to 261 (LISTTMELFMFAISLDKATNELSVFNTHL) is leucine-zipper. S1247 carries the post-translational modification Phosphoserine.

The protein belongs to the non-repetitive/WGA-negative nucleoporin family. In terms of assembly, component of the nuclear pore complex (NPC). NPC constitutes the exclusive means of nucleocytoplasmic transport. NPCs allow the passive diffusion of ions and small molecules and the active, nuclear transport receptor-mediated bidirectional transport of macromolecules such as proteins, RNAs, ribonucleoparticles (RNPs), and ribosomal subunits across the nuclear envelope. Due to its 8-fold rotational symmetry, all subunits are present with 8 copies or multiples thereof. During mitosis NUP53 changes its binding partner within the NPC from NUP170 to NIC96, exposing a high affinity binding site for the karyopherin PSE1, and retaining it in the NPC.

The protein localises to the nucleus. The protein resides in the nuclear pore complex. It is found in the nucleus membrane. Its function is as follows. Functions as a component of the nuclear pore complex (NPC). NPC components, collectively referred to as nucleoporins (NUPs), can play the role of both NPC structural components and of docking or interaction partners for transiently associated nuclear transport factors. NUP170 probably plays an important role in NPC assembly and organization. In addition it is required for chromosome transmission fidelity. The sequence is that of Nucleoporin NUP170 (NUP170) from Saccharomyces cerevisiae (strain ATCC 204508 / S288c) (Baker's yeast).